A 55-amino-acid polypeptide reads, in one-letter code: UPF0391 membrane protein Meso_3110 (55 aa).

2 helical membrane-spanning segments follow: residues Trp-4 to Ala-24 and Ile-30 to Leu-50.

The protein belongs to the UPF0391 family.

The protein localises to the cell membrane. The polypeptide is UPF0391 membrane protein Meso_3110 (Chelativorans sp. (strain BNC1)).